The following is a 213-amino-acid chain: RNA polymerase I subunit H (213 aa).

Residues 1 to 19 show a composition bias toward basic and acidic residues; sequence MVERMKKDTGDETKTKVQE. The segment at 1-70 is disordered; sequence MVERMKKDTG…AREFTDKPWR (70 aa). Residues 21–31 are compositionally biased toward pro residues; it reads PPSPSPPPPPP. 2 stretches are compositionally biased toward basic and acidic residues: residues 43–53 and 60–69; these read VPEREKKQIER and HAREFTDKPW.

Expressed during spermatogenesis, initially at pachytene stage with abundance increasing in round spermatids and decreasing again during spermatid elongation.

Its function is as follows. May be involved in male sterility. The chain is RNA polymerase I subunit H from Mus musculus (Mouse).